The sequence spans 589 residues: MSPTNVQVTDYHLNQSKTDTTNLWSTDDDASVMEAFIGGGSDHSSLFPPLPPPPLPQVNEDNLQQRLQALIEGANENWTYAVFWQSSHGFAGEDNNNNNTVLLGWGDGYYKGEEEKSRKKKSNPASAAEQEHRKRVIRELNSLISGGVGGGDEAGDEEVTDTEWFFLVSMTQSFVKGTGLPGQAFSNSDTIWLSGSNALAGSSCERARQGQIYGLQTMVCVATENGVVELGSSEIIHQSSDLVDKVDTFFNFNNGGGEFGSWAFNLNPDQGENDPGLWISEPNGVDSGLVAAPVMNNGGNDSTSNSDSQPISKLCNGSSVENPNPKVLKSCEMVNFKNGIENGQEEDSSNKKRSPVSNNEEGMLSFTSVLPCDSNHSDLEASVAKEAESNRVVVEPEKKPRKRGRKPANGREEPLNHVEAERQRREKLNQRFYSLRAVVPNVSKMDKASLLGDAISYISELKSKLQKAESDKEELQKQIDVMNKEAGNAKSSVKDRKCLNQESSVLIEMEVDVKIIGWDAMIRIQCSKRNHPGAKFMEALKELDLEVNHASLSVVNDLMIQQATVKMGNQFFTQDQLKVALTEKVGECP.

Positions 99-150 (NTVLLGWGDGYYKGEEEKSRKKKSNPASAAEQEHRKRVIRELNSLISGGVGG) are JAZ-interaction domain. 4 disordered regions span residues 114-133 (EEKS…QEHR), 291-326 (AAPV…PNPK), 340-359 (IENG…VSNN), and 381-422 (ASVA…EAER). The segment covering 296–308 (NNGGNDSTSNSDS) has biased composition (low complexity). Positions 309–322 (QPISKLCNGSSVEN) are enriched in polar residues. A compositionally biased stretch (basic and acidic residues) spans 381-398 (ASVAKEAESNRVVVEPEK). Residues 399–408 (KPRKRGRKPA) are compositionally biased toward basic residues. Residues 409–422 (NGREEPLNHVEAER) show a composition bias toward basic and acidic residues. Residues 412–461 (EEPLNHVEAERQRREKLNQRFYSLRAVVPNVSKMDKASLLGDAISYISEL) enclose the bHLH domain.

Homo- and heterodimer. Interacts with MYB28, MYB29, MYB34, MYB51, MYB76, MYB122, MYC3, AFPH2/NINJA and the JAZ repressors TIFY10A/JAZ1, TIFY10B/JAZ2, TIFY6B/JAZ3, TIFY6A/JAZ4, TIFY11A/JAZ5, TIFY11B/JAZ6, TIFY5B/JAZ7, TIFY5A/JAZ8, TIFY7/JAZ9, TIFY9/JAZ10, TIFY3A/JAZ11 and TIFY3B/JAZ12. As to expression, expressed constitutively at low levels. Preferentially expressed in vascular tissues.

It localises to the nucleus. Transcription factor involved in jasmonic acid (JA) gene regulation. With MYC2 and MYC3, controls additively subsets of JA-dependent responses. Can form complexes with all known glucosinolate-related MYBs to regulate glucosinolate biosynthesis. Binds to the G-box (5'-CACGTG-3') of promoters. Activates multiple TIFY/JAZ promoters. The polypeptide is Transcription factor MYC4 (MYC4) (Arabidopsis thaliana (Mouse-ear cress)).